Reading from the N-terminus, the 90-residue chain is Large ribosomal subunit protein bL27 (90 aa).

The interval 1 to 20 (MAHKKAGGSSRNGRDSAGKR) is disordered.

The protein belongs to the bacterial ribosomal protein bL27 family.

The protein is Large ribosomal subunit protein bL27 of Nitrobacter hamburgensis (strain DSM 10229 / NCIMB 13809 / X14).